The chain runs to 379 residues: MSQLDLGTQQLELERYPQQEESTQLQAWEAADEYLLQQLENVNIGDRPVLIFNDNFGTLACALHSHQPYSISDSYMSQLATRHNLKLNELDPQQVTLLDTLAELPASPAVVLIRIPKALALLEQQLRALRDVVAPDTVIIAGAKARDVHTSTMQLFEKVLGPTRTSLAWKKARLIHCEVADIVPPAAPVTTNWVLDGTDWVIHNHANVFSRSNLDIGARLFLDHLPHDIEGHIIDLGCGNGVIGMAALMQNPQAQVSFVDESYMAVASSELNVEHNLPQDMDRCQFEVNNSLAGIERESVQAVLCNPPFHQQHAITDHTAWQMFCDAKRCLQVGGELRIVGNRHLDYHQKLKRLFGNCTLIASNKKFVILKAVKSGARY.

Belongs to the methyltransferase superfamily. RlmG family.

It localises to the cytoplasm. The enzyme catalyses guanosine(1835) in 23S rRNA + S-adenosyl-L-methionine = N(2)-methylguanosine(1835) in 23S rRNA + S-adenosyl-L-homocysteine + H(+). Its function is as follows. Specifically methylates the guanine in position 1835 (m2G1835) of 23S rRNA. The polypeptide is Ribosomal RNA large subunit methyltransferase G (Serratia proteamaculans (strain 568)).